A 118-amino-acid chain; its full sequence is Small ribosomal subunit protein uS13 (118 aa).

Positions 92 to 118 (RKGLPVRGQRTKTNARTRKGPRKPIRK) are disordered.

Belongs to the universal ribosomal protein uS13 family. As to quaternary structure, part of the 30S ribosomal subunit. Forms a loose heterodimer with protein S19. Forms two bridges to the 50S subunit in the 70S ribosome.

Located at the top of the head of the 30S subunit, it contacts several helices of the 16S rRNA. In the 70S ribosome it contacts the 23S rRNA (bridge B1a) and protein L5 of the 50S subunit (bridge B1b), connecting the 2 subunits; these bridges are implicated in subunit movement. Contacts the tRNAs in the A and P-sites. This Pseudomonas putida (strain W619) protein is Small ribosomal subunit protein uS13.